The primary structure comprises 184 residues: ATP synthase subunit delta (184 aa).

This sequence belongs to the ATPase delta chain family. F-type ATPases have 2 components, F(1) - the catalytic core - and F(0) - the membrane proton channel. F(1) has five subunits: alpha(3), beta(3), gamma(1), delta(1), epsilon(1). F(0) has three main subunits: a(1), b(2) and c(10-14). The alpha and beta chains form an alternating ring which encloses part of the gamma chain. F(1) is attached to F(0) by a central stalk formed by the gamma and epsilon chains, while a peripheral stalk is formed by the delta and b chains.

It is found in the cell membrane. F(1)F(0) ATP synthase produces ATP from ADP in the presence of a proton or sodium gradient. F-type ATPases consist of two structural domains, F(1) containing the extramembraneous catalytic core and F(0) containing the membrane proton channel, linked together by a central stalk and a peripheral stalk. During catalysis, ATP synthesis in the catalytic domain of F(1) is coupled via a rotary mechanism of the central stalk subunits to proton translocation. In terms of biological role, this protein is part of the stalk that links CF(0) to CF(1). It either transmits conformational changes from CF(0) to CF(1) or is implicated in proton conduction. This Rickettsia africae (strain ESF-5) protein is ATP synthase subunit delta.